Consider the following 217-residue polypeptide: 3,4-dihydroxy-2-butanone 4-phosphate synthase (217 aa).

Residues 37-38 (RE), aspartate 42, 150-154 (RRGHT), and glutamate 174 each bind D-ribulose 5-phosphate. Glutamate 38 is a Mg(2+) binding site. Histidine 153 is a binding site for Mg(2+).

It belongs to the DHBP synthase family. In terms of assembly, homodimer. Requires Mg(2+) as cofactor. Mn(2+) is required as a cofactor.

It catalyses the reaction D-ribulose 5-phosphate = (2S)-2-hydroxy-3-oxobutyl phosphate + formate + H(+). It functions in the pathway cofactor biosynthesis; riboflavin biosynthesis; 2-hydroxy-3-oxobutyl phosphate from D-ribulose 5-phosphate: step 1/1. Its function is as follows. Catalyzes the conversion of D-ribulose 5-phosphate to formate and 3,4-dihydroxy-2-butanone 4-phosphate. The polypeptide is 3,4-dihydroxy-2-butanone 4-phosphate synthase (Shewanella putrefaciens (strain CN-32 / ATCC BAA-453)).